We begin with the raw amino-acid sequence, 132 residues long: Venom CUB domain-containing protein 2 (132 aa).

The N-terminal stretch at 1–17 (MKTLFLAIALFSAVALA) is a signal peptide. Residues 22 to 129 (ESAELVPGGE…RGFVACKATA (108 aa)) form the CUB domain. 2 cysteine pairs are disulfide-bonded: Cys66-Cys125 and Cys77-Cys94.

This sequence belongs to the venom CUB family. As to expression, expressed by the venom gland (posterior main gland) (at protein level).

It localises to the secreted. The protein is Venom CUB domain-containing protein 2 of Platymeris rhadamanthus (Red spot assassin bug).